Here is a 167-residue protein sequence, read N- to C-terminus: ATP synthase subunit b (167 aa).

Residues 10–30 (TFFFQLANTLIMFLILKHFLF) traverse the membrane as a helical segment.

This sequence belongs to the ATPase B chain family. As to quaternary structure, F-type ATPases have 2 components, F(1) - the catalytic core - and F(0) - the membrane proton channel. F(1) has five subunits: alpha(3), beta(3), gamma(1), delta(1), epsilon(1). F(0) has three main subunits: a(1), b(2) and c(10-14). The alpha and beta chains form an alternating ring which encloses part of the gamma chain. F(1) is attached to F(0) by a central stalk formed by the gamma and epsilon chains, while a peripheral stalk is formed by the delta and b chains.

It localises to the cell membrane. Its function is as follows. F(1)F(0) ATP synthase produces ATP from ADP in the presence of a proton or sodium gradient. F-type ATPases consist of two structural domains, F(1) containing the extramembraneous catalytic core and F(0) containing the membrane proton channel, linked together by a central stalk and a peripheral stalk. During catalysis, ATP synthesis in the catalytic domain of F(1) is coupled via a rotary mechanism of the central stalk subunits to proton translocation. In terms of biological role, component of the F(0) channel, it forms part of the peripheral stalk, linking F(1) to F(0). This Alkaliphilus oremlandii (strain OhILAs) (Clostridium oremlandii (strain OhILAs)) protein is ATP synthase subunit b.